Reading from the N-terminus, the 854-residue chain is N-terminal acetyltransferase A complex subunit NAT1 (854 aa).

The residue at position 2 (Ser2) is an N-acetylserine. TPR repeat units lie at residues 20 to 53, 54 to 87, 91 to 124, 126 to 162, 241 to 274, 384 to 417, and 452 to 485; these read ENDQFLEALKLYEGKQYKKSLKLLDAILKKDGSH, VDSLALKGLDLYSVGEKDDAASYVANAIRKIEGA, PICCHVLGIYMRNTKEYKESIKWFTAALNNGSTN, QIYRDLATLQSQIGDFKNALVSRKKYWEAFLGYRANW, FGLLERKATIYMKLGQLKDASIVYRTLIKRNPDN, IWTNYYLSQHFLFLKDFPKAQEYIDAALDHTPTL, and RFINCKTVKYFLRANNIDKAVEVASLFTKNDDSV. The stretch at 623–667 forms a coiled coil; sequence LKRKSDSLDENSDEIQNNGQNSSSQKKKAKKEAAAMNKRKETEAK. Residues 626–668 are disordered; sequence KSDSLDENSDEIQNNGQNSSSQKKKAKKEAAAMNKRKETEAKS. The residue at position 674 (Ser674) is a Phosphoserine. Residues 728-761 form a TPR 8 repeat; sequence ALCFASLNKFAKRFGTTSGLFGSMAIVLLHATRN.

Component of the N-terminal acetyltransferase A (NatA) complex, which is composed of ARD1, NAT1 and NAT5. Can self-associate. NAT1 associates with the nascent polypeptide chain and the ribosome. In terms of processing, the N-terminus is blocked.

The protein localises to the cytoplasm. In terms of biological role, non-catalytic component of the NatA N-terminal acetyltransferase, which catalyzes acetylation of proteins beginning with Met-Ser, Met-Gly and Met-Ala. N-acetylation plays a role in normal eukaryotic translation and processing, protect against proteolytic degradation and protein turnover. NAT1 anchors ARD1 and NAT5 to the ribosome and may present the N termini of nascent polypeptides for acetylation. The protein is N-terminal acetyltransferase A complex subunit NAT1 (NAT1) of Saccharomyces cerevisiae (strain ATCC 204508 / S288c) (Baker's yeast).